A 29-amino-acid chain; its full sequence is U20-ctenitoxin-Co1a (29 aa).

2 disulfide bridges follow: C3/C16 and C10/C21.

In terms of tissue distribution, expressed by the venom gland.

The protein localises to the secreted. This Ctenus ornatus (Brazilian spider) protein is U20-ctenitoxin-Co1a.